Reading from the N-terminus, the 613-residue chain is Maintenance of telomere capping protein 6 (613 aa).

The N-terminal stretch at methionine 1–glycine 17 is a signal peptide. The Extracellular segment spans residues serine 18 to lysine 557. N-linked (GlcNAc...) asparagine glycans are attached at residues asparagine 31, asparagine 111, asparagine 128, asparagine 136, asparagine 177, asparagine 202, asparagine 230, asparagine 242, asparagine 313, asparagine 328, asparagine 343, asparagine 375, asparagine 388, asparagine 417, asparagine 424, asparagine 425, asparagine 479, and asparagine 480. A helical membrane pass occupies residues phenylalanine 558–isoleucine 578. At glutamate 579–serine 613 the chain is on the cytoplasmic side.

It belongs to the MTC6 family.

Its subcellular location is the membrane. May be involved in telomere capping. The polypeptide is Maintenance of telomere capping protein 6 (MTC6) (Candida albicans (strain WO-1) (Yeast)).